Reading from the N-terminus, the 230-residue chain is Sugar fermentation stimulation protein homolog (230 aa).

This sequence belongs to the SfsA family.

This Clostridium kluyveri (strain NBRC 12016) protein is Sugar fermentation stimulation protein homolog.